A 1388-amino-acid polypeptide reads, in one-letter code: Kinesin-like protein KIF15 (1388 aa).

Positions 1–25 (MAPGCKTELRSVTNGQSNQPSNEGD) are disordered. The segment covering 10–22 (RSVTNGQSNQPSN) has biased composition (polar residues). A Kinesin motor domain is found at 26-363 (AIKVFVRIRP…LNFAQRAKLI (338 aa)). 109 to 116 (GQTGSGKT) serves as a coordination point for ATP. The stretch at 368–1388 (VVNEDTQGNV…FLKEKKRSES (1021 aa)) forms a coiled coil. Threonine 399 is modified (phosphothreonine). A Phosphoserine modification is found at serine 568. Lysine 1009 is subject to N6-acetyllysine. Phosphoserine is present on residues serine 1141 and serine 1169. The disordered stretch occupies residues 1228-1250 (QKENSDQNHPDNQQLKNEQEESI).

It belongs to the TRAFAC class myosin-kinesin ATPase superfamily. Kinesin family. KLP2 subfamily. In terms of assembly, interacts with MKI67 and TPX2. Expressed in testis, colon, thymus and in breast cancer.

Its subcellular location is the cytoplasm. The protein localises to the cytoskeleton. It is found in the spindle. In terms of biological role, plus-end directed kinesin-like motor enzyme involved in mitotic spindle assembly. The protein is Kinesin-like protein KIF15 (KIF15) of Homo sapiens (Human).